Reading from the N-terminus, the 595-residue chain is D-xylonate dehydratase (595 aa).

Cys64 is a binding site for [2Fe-2S] cluster. Glu96 contacts Mg(2+). [2Fe-2S] cluster is bound at residue Cys132. Asp133 contacts Mg(2+). Cys205 contributes to the [2Fe-2S] cluster binding site. Glu467 contacts Mg(2+).

Belongs to the IlvD/Edd family. In terms of assembly, homotetramer. The cofactor is [2Fe-2S] cluster. Mg(2+) is required as a cofactor.

The enzyme catalyses D-xylonate = 2-dehydro-3-deoxy-D-arabinonate + H2O. The catalysed reaction is D-gluconate = 2-dehydro-3-deoxy-D-gluconate + H2O. It participates in carbohydrate metabolism; D-xylose degradation. Its function is as follows. Catalyzes the dehydration of D-xylonate to 2-dehydro-3-deoxy-D-arabinonate during D-xylose degradation. Can also dehydrate D-gluconate, with similar catalytic efficiency. Has weak activity with D-galactonate, D-fuconate and L-arabinonate. The chain is D-xylonate dehydratase from Caulobacter vibrioides (strain ATCC 19089 / CIP 103742 / CB 15) (Caulobacter crescentus).